We begin with the raw amino-acid sequence, 311 residues long: Transcription factor MafB (311 aa).

2 disordered regions span residues 35 to 78 (PLGR…PTEQ) and 150 to 199 (EDLA…EDRF). Over residues 54–76 (SVSSTPISTPCSSVPSSPSFSPT) the composition is skewed to low complexity. A compositionally biased stretch (basic residues) spans 157–167 (HPHHHHHHHHQ). Positions 168-194 (ASPTPSTSSSSSQQLQTSHQQHPPSSS) are enriched in low complexity. The tract at residues 226–251 (RLKQKRRTLKNRGYAQSCRYKRVQQK) is basic motif. Positions 226–289 (RLKQKRRTLK…DAYKLKCEKL (64 aa)) constitute a bZIP domain. The leucine-zipper stretch occupies residues 254–275 (LENEKTQLIQQVEQLKQEVTRL).

The protein belongs to the bZIP family. Maf subfamily. As to quaternary structure, homodimer or heterodimer with other bHLH-Zip transcription factors. Binds DNA as a homodimer or heterodimer. Self-associates; the interaction requires the intact MAFB leucine-zipper domain. Interacts with FOS, HOXD12 and PRRX1. In terms of tissue distribution, expressed in brain, thymus, gut, lung, mesenterium, spleen, kidney, ovary and bursa.

It is found in the nucleus. In terms of biological role, acts as a transcriptional activator or repressor. Positively regulates the expression of alpha-A crystallin genes during lens fiber cell differentiation. Binds to Maf recognition elements (MARE). This is Transcription factor MafB (MAFB) from Gallus gallus (Chicken).